Reading from the N-terminus, the 338-residue chain is 1-aminocyclopropane-1-carboxylate deaminase (338 aa).

Lysine 51 bears the N6-(pyridoxal phosphate)lysine mark. Serine 78 serves as the catalytic Nucleophile.

Belongs to the ACC deaminase/D-cysteine desulfhydrase family. Homotrimer. The cofactor is pyridoxal 5'-phosphate.

It carries out the reaction 1-aminocyclopropane-1-carboxylate + H2O = 2-oxobutanoate + NH4(+). In terms of biological role, catalyzes a cyclopropane ring-opening reaction, the irreversible conversion of 1-aminocyclopropane-1-carboxylate (ACC) to ammonia and alpha-ketobutyrate. Allows growth on ACC as a nitrogen source. This Burkholderia cenocepacia (strain HI2424) protein is 1-aminocyclopropane-1-carboxylate deaminase.